We begin with the raw amino-acid sequence, 116 residues long: Large ribosomal subunit protein uL18 (116 aa).

This sequence belongs to the universal ribosomal protein uL18 family. In terms of assembly, part of the 50S ribosomal subunit; part of the 5S rRNA/L5/L18/L25 subcomplex. Contacts the 5S and 23S rRNAs.

This is one of the proteins that bind and probably mediate the attachment of the 5S RNA into the large ribosomal subunit, where it forms part of the central protuberance. This is Large ribosomal subunit protein uL18 from Shewanella loihica (strain ATCC BAA-1088 / PV-4).